We begin with the raw amino-acid sequence, 131 residues long: MEHEYPDDLRYLDSHEYVRLDGEIATIGISAFAIEQLGDIVFLELPEVGEAVEVGESFGHIESVKAVEDLYPPVSGTVIERNEAMIDSPELIGDDPYGEGWLLKLRVVNPDNELDDTLTADEYRSQVEGEA.

In terms of domain architecture, Lipoyl-binding spans 24-106; it reads IATIGISAFA…YGEGWLLKLR (83 aa). N6-lipoyllysine is present on K65.

This sequence belongs to the GcvH family. The glycine cleavage system is composed of four proteins: P, T, L and H. The cofactor is (R)-lipoate.

In terms of biological role, the glycine cleavage system catalyzes the degradation of glycine. The H protein shuttles the methylamine group of glycine from the P protein to the T protein. In Gloeothece citriformis (strain PCC 7424) (Cyanothece sp. (strain PCC 7424)), this protein is Glycine cleavage system H protein.